Reading from the N-terminus, the 149-residue chain is Tetracenomycin polyketide synthase protein TcmJ (149 aa).

The region spanning 51-117 (HIELAPGESV…NRGNVPARVV (67 aa)) is the Cupin type-2 domain. The interval 127–149 (PELGHVDTEPVPNPAAAPPKVGG) is disordered.

As to quaternary structure, the tetracenomycin polyketide synthase (TCM PKS) is composed of a ketosynthase complex (TcmKL), an acyl carrier protein (TcmM), a cyclase (TcmN) and a probable second cyclase (TcmJ).

It carries out the reaction 10 malonyl-CoA + 8 H(+) = tetracenomycin F2 + 10 CO2 + 10 CoA + 2 H2O. It participates in antibiotic biosynthesis; tetracenomycin C biosynthesis. In terms of biological role, involved in the biosynthesis of tetracenomycin C (TCM C). Part of a type II polyketide synthase (PKS) that catalyzes the synthesis of tetracenomycin F2 (TCM F2), a precursor of TCM C, from malonyl-CoA. TcmJ, while not absolutely required, greatly increases the tetracenomycin F2 production. It probably acts as a cyclase. The sequence is that of Tetracenomycin polyketide synthase protein TcmJ from Streptomyces glaucescens.